The chain runs to 124 residues: Large ribosomal subunit protein bL21 (124 aa).

It belongs to the bacterial ribosomal protein bL21 family. In terms of assembly, part of the 50S ribosomal subunit. Contacts protein L20.

In terms of biological role, this protein binds to 23S rRNA in the presence of protein L20. This chain is Large ribosomal subunit protein bL21, found in Synechococcus sp. (strain WH7803).